The primary structure comprises 534 residues: Glucomannan 4-beta-mannosyltransferase 2 (534 aa).

A helical membrane pass occupies residues 36 to 56 (VIVPLLQLAVYICLLMSVMLL). Aspartate 136 is an active-site residue. Residues aspartate 195 and aspartate 197 each contribute to the substrate site. Aspartate 289 is an active-site residue. 4 consecutive transmembrane segments (helical) span residues 368-388 (IIAH…TILV), 404-426 (IITI…WILF), 483-503 (LNTL…YDFV), and 509-529 (YFIY…GWIG).

This sequence belongs to the glycosyltransferase 2 family. Plant cellulose synthase-like A subfamily.

Its subcellular location is the golgi apparatus membrane. It catalyses the reaction GDP-mannose + (glucomannan)n = GDP + (glucomannan)n+1.. Its function is as follows. Possesses glucomannan synthase and mannan synthase activities in vitro. Mannan synthase consists of a 4-beta-mannosyltransferase activity on mannan using GDP-mannose. The beta-1,4-mannan product is the backbone for galactomannan synthesis by galactomannan galactosyltransferase. Galactomannan is a noncellulosic polysaccharides of plant cell wall. This chain is Glucomannan 4-beta-mannosyltransferase 2, found in Arabidopsis thaliana (Mouse-ear cress).